The sequence spans 490 residues: Thyroid hormone receptor alpha (490 aa).

The disordered stretch occupies residues 1 to 32 (MEQKPSKVECGSDPEENSARSPDGKRKRKNGQ). Residues 1–52 (MEQKPSKVECGSDPEENSARSPDGKRKRKNGQCSLKTSMSGYIPSYLDKDEQ) form a modulating region. 8 residues coordinate Zn(2+): cysteine 53, cysteine 56, cysteine 70, cysteine 73, cysteine 91, cysteine 97, cysteine 107, and cysteine 110. 2 NR C4-type zinc fingers span residues 53-73 (CVVC…CEGC) and 91-115 (CKYD…FKKC). A DNA-binding region (nuclear receptor) is located at residues 53-127 (CVVCGDKATG…VGMAMDLVLD (75 aa)). Positions 163 to 407 (EEWDLIHIAT…EGQQLLGMHV (245 aa)) constitute an NR LBD domain. The 3,3',5-triiodo-L-thyronine site is built by arginine 228 and serine 277. Residues 457–490 (AVCGEDDSSEADSPSSSEEEPEVCEDLAGNAASP) form a disordered region.

It belongs to the nuclear hormone receptor family. NR1 subfamily. As to quaternary structure, binds DNA as a dimer; homodimer and heterodimer with RXRB. Interacts with NCOA3 and NCOA6 coactivators, leading to a strong increase of transcription of target genes. Probably interacts with SFPQ. Interacts with C1D. Interacts with AKAP13. Interacts with TP53INP2. Interacts with PER2. Isoform alpha-2 and isoform alpha-1 interact with TACC1, but the interaction with alpha-1 is weaker. The interaction with isoform alpha-1, but not alpha-2, is decreased in the presence of thyroid hormone T3.

The protein localises to the nucleus. It is found in the cytoplasm. Functionally, nuclear hormone receptor that can act as a repressor or activator of transcription. High affinity receptor for thyroid hormones, including triiodothyronine and thyroxine. Its function is as follows. Does not bind thyroid hormone and functions as a weak dominant negative inhibitor of thyroid hormone action. The chain is Thyroid hormone receptor alpha (THRA) from Homo sapiens (Human).